A 386-amino-acid chain; its full sequence is Myosin light chain kinase family member 4 (386 aa).

The residue at position 100 (serine 100) is a Phosphoserine. A Protein kinase domain is found at 107-361 (VSKSEILGGG…ASEALKHPWL (255 aa)). ATP contacts are provided by residues 113–121 (LGGGRFGQV) and lysine 136. Aspartate 227 serves as the catalytic Proton acceptor.

Belongs to the protein kinase superfamily. CAMK Ser/Thr protein kinase family.

It carries out the reaction L-seryl-[protein] + ATP = O-phospho-L-seryl-[protein] + ADP + H(+). The enzyme catalyses L-threonyl-[protein] + ATP = O-phospho-L-threonyl-[protein] + ADP + H(+). This chain is Myosin light chain kinase family member 4 (Mylk4), found in Mus musculus (Mouse).